The primary structure comprises 212 residues: LexA repressor (212 aa).

Positions 29-49 (VREIGEAVGLSSSSTIHGHIE) form a DNA-binding region, H-T-H motif. Catalysis depends on for autocatalytic cleavage activity residues Ser-133 and Lys-171.

The protein belongs to the peptidase S24 family. Homodimer.

The enzyme catalyses Hydrolysis of Ala-|-Gly bond in repressor LexA.. Its function is as follows. Represses a number of genes involved in the response to DNA damage (SOS response), including recA and lexA. In the presence of single-stranded DNA, RecA interacts with LexA causing an autocatalytic cleavage which disrupts the DNA-binding part of LexA, leading to derepression of the SOS regulon and eventually DNA repair. The chain is LexA repressor from Leuconostoc mesenteroides subsp. mesenteroides (strain ATCC 8293 / DSM 20343 / BCRC 11652 / CCM 1803 / JCM 6124 / NCDO 523 / NBRC 100496 / NCIMB 8023 / NCTC 12954 / NRRL B-1118 / 37Y).